The following is a 76-amino-acid chain: Dermaseptin-S7 (76 aa).

The signal sequence occupies residues methionine 1–cysteine 22. Positions glutamate 23–arginine 45 are excised as a propeptide. The disordered stretch occupies residues glutamate 25–arginine 45. Over residues glutamate 30 to serine 41 the composition is skewed to acidic residues. Glutamine 73 is modified (glutamine amide). The propeptide occupies glutamate 75–glutamine 76.

It belongs to the frog skin active peptide (FSAP) family. Dermaseptin subfamily. Expressed by the skin glands.

It localises to the secreted. Antimicrobial peptide. The protein is Dermaseptin-S7 of Phyllomedusa sauvagei (Sauvage's leaf frog).